Consider the following 160-residue polypeptide: Transcription antitermination protein NusB (160 aa).

Belongs to the NusB family.

Functionally, involved in transcription antitermination. Required for transcription of ribosomal RNA (rRNA) genes. Binds specifically to the boxA antiterminator sequence of the ribosomal RNA (rrn) operons. In Sinorhizobium medicae (strain WSM419) (Ensifer medicae), this protein is Transcription antitermination protein NusB.